Reading from the N-terminus, the 374-residue chain is Fe(2+) transport protein 1 (374 aa).

Residues 1–33 form the signal peptide; the sequence is MATPRTLVPILPPVAALLLLLVAASSIPILAAA. The Extracellular segment spans residues 34-62; the sequence is QPADACGGAPDQAAADGACHDVPRALRLK. A helical transmembrane segment spans residues 63–83; that stretch reads LIAIPTILVSSVVGVCLPLLS. Residues 84-92 are Cytoplasmic-facing; sequence RSVPALRPD. Residues 93–113 traverse the membrane as a helical segment; sequence GGLFAVVKAFASGVILATGYM. The Extracellular segment spans residues 114–137; sequence HVLPDAFNNLTSPCLPRKPWSEFP. Residues 138-158 traverse the membrane as a helical segment; it reads FAAFVAMLAAVSTLMADSLML. Over 159–219 the chain is Cytoplasmic; sequence TYYNRSKPRP…ATQVQLRRNR (61 aa). The segment at 166 to 199 is disordered; sequence PRPSSGGDVAAVADHGESPDQGHRHGHGHGHGHG. A compositionally biased stretch (basic and acidic residues) spans 179 to 188; it reads DHGESPDQGH. The helical transmembrane segment at 220–240 threads the bilayer; the sequence is VVVQVLEIGIVVHSVVIGLGM. At 241–251 the chain is on the extracellular side; that stretch reads GASQNVCTIRP. The chain crosses the membrane as a helical span at residues 252–272; that stretch reads LVAAMCFHQMFEGMGLGGCIL. Residues 273–282 lie on the Cytoplasmic side of the membrane; that stretch reads QAEYGRRMRS. A helical transmembrane segment spans residues 283–303; sequence VLVFFFSTTTPFGIALGLALT. Residues 304-313 are Extracellular-facing; it reads RVYRDNSPTA. A helical membrane pass occupies residues 314-334; the sequence is LIVVGLLNAASAGLLHYMALV. At 335 to 353 the chain is on the cytoplasmic side; that stretch reads ELLAADFMGPKLQGNVRLQ. A helical transmembrane segment spans residues 354–374; the sequence is LAAFLAVLLGAGGMSVMAKWA.

The protein belongs to the ZIP transporter (TC 2.A.5) family. As to expression, expressed in companion cells in the upper region of the root.

The protein resides in the cell membrane. Its function is as follows. Iron transporter involved in the uptake of iron from the rhizosphere across the plasma membrane in the root epidermal layer. May also transport other divalent cations. In Oryza sativa subsp. japonica (Rice), this protein is Fe(2+) transport protein 1 (IRT1).